Consider the following 942-residue polypeptide: Alanine--tRNA ligase (942 aa).

4 residues coordinate Zn(2+): His586, His590, Cys695, and His699.

This sequence belongs to the class-II aminoacyl-tRNA synthetase family. It depends on Zn(2+) as a cofactor.

Its subcellular location is the cytoplasm. The catalysed reaction is tRNA(Ala) + L-alanine + ATP = L-alanyl-tRNA(Ala) + AMP + diphosphate. Catalyzes the attachment of alanine to tRNA(Ala) in a two-step reaction: alanine is first activated by ATP to form Ala-AMP and then transferred to the acceptor end of tRNA(Ala). Also edits incorrectly charged Ser-tRNA(Ala) and Gly-tRNA(Ala) via its editing domain. This Akkermansia muciniphila (strain ATCC BAA-835 / DSM 22959 / JCM 33894 / BCRC 81048 / CCUG 64013 / CIP 107961 / Muc) protein is Alanine--tRNA ligase.